A 1318-amino-acid chain; its full sequence is Major tegument protein (1318 aa).

Belongs to the herpesviridae MTP family. As to quaternary structure, interacts with host DAXX; this interaction disrupts the chromatin remodeling complex ATRX:DAXX and thus allows viral transcription. Interacts with host SMC6; this interaction targets SMC5-SMC6 complex for proteasomal degradation.

Its subcellular location is the virion tegument. The protein resides in the host nucleus. Tegument protein that plays a role in the inhibition of host intrinsic defenses to promote viral early gene activation. Interacts with host DAXX and thereby disrupts the complex between DAXX and ATRX. Suppresses the DAXX-ATRX dependent deposition of histone H3.3 on viral chromatin allowing viral transcription. Targets also host SMC5/6 for proteasomal degradation in a CUL7 and calpain-dependent manner to support nuclear membrane-less replication compartment formation and lytic virus replication. The chain is Major tegument protein from Homo sapiens (Human).